The primary structure comprises 182 residues: Meiotically up-regulated gene 82 protein (182 aa).

The segment at 161 to 182 (EKRLSEKKYKQKKKTQRRITMD) is disordered. A compositionally biased stretch (basic residues) spans 169 to 182 (YKQKKKTQRRITMD).

This sequence belongs to the prokaryotic/mitochondrial release factor family.

It localises to the mitochondrion. In terms of biological role, has a role in meiosis. The polypeptide is Meiotically up-regulated gene 82 protein (mug82) (Schizosaccharomyces pombe (strain 972 / ATCC 24843) (Fission yeast)).